The following is a 168-amino-acid chain: MAEAFRGEYNQKVDAKARVSIPAPFRRVIEAGDPKYSGGRASFVLVYGGDRSYVECYTMTEMDRIEERIRALPMGTPRRRYLERNMITLALNMELDEDGRIVLPPKGREKLGITPDELKGGTEATFAGTLNKFQIWKADTYAAELAAEEEVILPPGADMLSLLEETGL.

SpoVT-AbrB domains are found at residues 8–51 (EYNQ…GGDR) and 90–140 (ALNM…KADT).

This sequence belongs to the MraZ family. In terms of assembly, forms oligomers.

It is found in the cytoplasm. The protein resides in the nucleoid. The chain is Transcriptional regulator MraZ from Cereibacter sphaeroides (strain ATCC 17025 / ATH 2.4.3) (Rhodobacter sphaeroides).